Here is a 154-residue protein sequence, read N- to C-terminus: MTVEQKELGRADILEIMKLLPHRYPFLLVDRIIDIDGDNAAIGIKNVTANEPQFTGHFPEQPIMPGVLLIEGMAQTAGAICARKAGTAGDLVYFMTIDNARFRKPVVPGDRVEFHVTKQKQRGNVWKFHCDAKVDGALVAEADIGAMIVNKEAQ.

His-57 is an active-site residue.

Belongs to the thioester dehydratase family. FabZ subfamily.

Its subcellular location is the cytoplasm. The enzyme catalyses a (3R)-hydroxyacyl-[ACP] = a (2E)-enoyl-[ACP] + H2O. Involved in unsaturated fatty acids biosynthesis. Catalyzes the dehydration of short chain beta-hydroxyacyl-ACPs and long chain saturated and unsaturated beta-hydroxyacyl-ACPs. The polypeptide is 3-hydroxyacyl-[acyl-carrier-protein] dehydratase FabZ (Allorhizobium ampelinum (strain ATCC BAA-846 / DSM 112012 / S4) (Agrobacterium vitis (strain S4))).